Reading from the N-terminus, the 353-residue chain is MSDFWVHLLVYLVILFGFVIVSVLLFIWLERRFIGRFQLRPGPNRAGPFGLLQPIADAIKVLIKEDIIPTESDKGVFWLAPLVAFVPVMLMFAAIPFADGAMLVDLNIGILYILAVSSVTVIGIFMAGWSSNSKYSLLGAMRTIAQEVSYEIPLVLSILGVVMLTGSLSMNEIVKAQSVPFVLLQPLGFFVYLSAAMAEINRTPFDLLEAESEIIAGFHTEYSGMKFGLFYLMEYAEVLAISAIATTLFLGGWQGPLLHPVIWFITKVLIIFMFIIWVRATIPRLRIDQVMAFGWKFLLPLSLANLVITAFEILAAPDMNTAVLIGINIAVMFGLILLFSRFYKLGGGRVSVK.

Transmembrane regions (helical) follow at residues leucine 8–tryptophan 28, glycine 75–isoleucine 95, isoleucine 108–glycine 128, valine 148–leucine 168, serine 178–alanine 198, leucine 229–phenylalanine 249, leucine 258–valine 278, phenylalanine 297–proline 317, and methionine 319–phenylalanine 339.

Belongs to the complex I subunit 1 family. In terms of assembly, NDH-1 is composed of 14 different subunits. Subunits NuoA, H, J, K, L, M, N constitute the membrane sector of the complex.

The protein localises to the cell membrane. It carries out the reaction a quinone + NADH + 5 H(+)(in) = a quinol + NAD(+) + 4 H(+)(out). NDH-1 shuttles electrons from NADH, via FMN and iron-sulfur (Fe-S) centers, to quinones in the respiratory chain. The immediate electron acceptor for the enzyme in this species is believed to be ubiquinone. Couples the redox reaction to proton translocation (for every two electrons transferred, four hydrogen ions are translocated across the cytoplasmic membrane), and thus conserves the redox energy in a proton gradient. This subunit may bind ubiquinone. The chain is NADH-quinone oxidoreductase subunit H from Dehalococcoides mccartyi (strain ATCC BAA-2266 / KCTC 15142 / 195) (Dehalococcoides ethenogenes (strain 195)).